The chain runs to 344 residues: Phosphate acyltransferase (344 aa).

It belongs to the PlsX family. As to quaternary structure, homodimer. Probably interacts with PlsY.

The protein resides in the cytoplasm. The catalysed reaction is a fatty acyl-[ACP] + phosphate = an acyl phosphate + holo-[ACP]. It participates in lipid metabolism; phospholipid metabolism. Its function is as follows. Catalyzes the reversible formation of acyl-phosphate (acyl-PO(4)) from acyl-[acyl-carrier-protein] (acyl-ACP). This enzyme utilizes acyl-ACP as fatty acyl donor, but not acyl-CoA. The polypeptide is Phosphate acyltransferase (Sphingopyxis alaskensis (strain DSM 13593 / LMG 18877 / RB2256) (Sphingomonas alaskensis)).